The primary structure comprises 295 residues: Secreted frizzled-related protein 2 (295 aa).

A signal peptide spans 1-24 (MLQGPGSLLLLFLASHCCLGSARG). In terms of domain architecture, FZ spans 35-155 (YKRSNCKPIP…PQDNDLCIPL (121 aa)). Intrachain disulfides connect Cys40–Cys103, Cys50–Cys96, Cys87–Cys125, Cys114–Cys152, Cys118–Cys142, Cys172–Cys245, Cys175–Cys247, and Cys190–Cys295. Residues 172 to 295 (CEACKNKNDD…ISRSIRKLQC (124 aa)) enclose the NTR domain.

Belongs to the secreted frizzled-related protein (sFRP) family. In terms of tissue distribution, expressed in adipose tissue, heart, brain, skeletal muscle, pancreas, thymus, prostate, testis, ovary, small intestine and colon. Highest levels in adipose tissue, small intestine and colon.

It is found in the secreted. Soluble frizzled-related proteins (sFRPS) function as modulators of Wnt signaling through direct interaction with Wnts. They have a role in regulating cell growth and differentiation in specific cell types. SFRP2 may be important for eye retinal development and for myogenesis. This chain is Secreted frizzled-related protein 2 (SFRP2), found in Homo sapiens (Human).